The chain runs to 161 residues: Zinc metalloproteinase/disintegrin (161 aa).

The 72-residue stretch at 1-72 (ERDLLVAVTM…ENPQCILNKH (72 aa)) folds into the Peptidase M12B domain. Zn(2+) is bound at residue His12. Glu13 is an active-site residue. Zn(2+) contacts are provided by His16 and His22. Cystine bridges form between Cys27/Cys51 and Cys29/Cys34. Residues 73-88 (LRTDTVSTPVSGNELL) constitute a propeptide that is removed on maturation. The Disintegrin domain maps to 89–161 (EAGEECDCGT…ADCPRNRFHA (73 aa)). Disulfide bonds link Cys94/Cys109, Cys96/Cys104, Cys103/Cys126, Cys117/Cys123, Cys122/Cys147, and Cys135/Cys154. The Cell attachment site motif lies at 139–141 (RGD).

Belongs to the venom metalloproteinase (M12B) family. P-II subfamily. P-IIa sub-subfamily. As to quaternary structure, monomer. In terms of tissue distribution, expressed by the venom gland.

Its subcellular location is the secreted. Its function is as follows. Impairs hemostasis in the envenomed animal. Functionally, disintegrin: inhibit platelet aggregation induced by ADP, thrombin, platelet-activating factor and collagen. Acts by inhibiting fibrinogen interaction with platelet receptors GPIIb/GPIIIa (ITGA2B/ITGB3). The polypeptide is Zinc metalloproteinase/disintegrin (Bothrops jararaca (Jararaca)).